Here is a 363-residue protein sequence, read N- to C-terminus: Glycerol-3-phosphate dehydrogenase [NAD(+)], cytoplasmic (363 aa).

NAD(+) is bound by residues 11–16 (GSGNWG), Phe98, Lys121, and Ala155. Position 121 (Lys121) interacts with substrate. Residue Lys206 is the Proton acceptor of the active site. NAD(+) is bound by residues Arg270 and Gln299. 270-271 (RN) is a substrate binding site.

Belongs to the NAD-dependent glycerol-3-phosphate dehydrogenase family. In terms of assembly, homodimer. As to expression, isoform GPDH-1 is predominant in thorax and isoform GPDH-3 in abdomen.

It localises to the cytoplasm. It catalyses the reaction sn-glycerol 3-phosphate + NAD(+) = dihydroxyacetone phosphate + NADH + H(+). The protein operates within phospholipid metabolism; alpha-glycerophosphate cycle. The chain is Glycerol-3-phosphate dehydrogenase [NAD(+)], cytoplasmic from Drosophila melanogaster (Fruit fly).